Reading from the N-terminus, the 196-residue chain is UMP-CMP kinase (196 aa).

Glycine 13 to threonine 18 contacts ATP. Residues serine 33–valine 63 are NMP. A ribonucleoside 5'-phosphate contacts are provided by residues arginine 39, lysine 61–valine 63, and glycine 93–arginine 96. Asparagine 100 contributes to the CMP binding site. Residues glutamate 133–aspartate 143 are LID. Arginine 134 serves as a coordination point for ATP. Residues arginine 140 and arginine 151 each coordinate a ribonucleoside 5'-phosphate. Residue arginine 179 participates in ATP binding.

The protein belongs to the adenylate kinase family. UMP-CMP kinase subfamily. In terms of assembly, monomer. Requires Mg(2+) as cofactor.

It is found in the nucleus. It localises to the cytoplasm. It carries out the reaction CMP + ATP = CDP + ADP. It catalyses the reaction dCMP + ATP = dCDP + ADP. The enzyme catalyses UMP + ATP = UDP + ADP. The catalysed reaction is a 2'-deoxyribonucleoside 5'-diphosphate + ATP = a 2'-deoxyribonucleoside 5'-triphosphate + ADP. It carries out the reaction a ribonucleoside 5'-diphosphate + ATP = a ribonucleoside 5'-triphosphate + ADP. In terms of biological role, catalyzes the phosphorylation of pyrimidine nucleoside monophosphates at the expense of ATP. Plays an important role in de novo pyrimidine nucleotide biosynthesis. Has preference for UMP and CMP as phosphate acceptors. Also displays broad nucleoside diphosphate kinase activity. The chain is UMP-CMP kinase (cmpk) from Danio rerio (Zebrafish).